Here is a 206-residue protein sequence, read N- to C-terminus: MQDYKQPLRIGVGGPVGSGKTALLEVLCKTLRDTYQIAVVTNDIYTQEDAKILTQAEALAADRIIGVETGGCPHTAIREDASMNLAAVEELAQRHKNLDVVFVESGGDNLSATFSPELADLTIYVIDVAEGEKIPRKGGPGITKSDLLIINKIDLAPYVGASLEVMESDTARMRPTRPYVFTNLKEGVGLDKIIEFIVDRGMLDAK.

GTP is bound at residue 14-21; it reads GPVGSGKT.

It belongs to the SIMIBI class G3E GTPase family. UreG subfamily. Homodimer. UreD, UreF and UreG form a complex that acts as a GTP-hydrolysis-dependent molecular chaperone, activating the urease apoprotein by helping to assemble the nickel containing metallocenter of UreC. The UreE protein probably delivers the nickel.

The protein localises to the cytoplasm. Functionally, facilitates the functional incorporation of the urease nickel metallocenter. This process requires GTP hydrolysis, probably effectuated by UreG. This chain is Urease accessory protein UreG, found in Aliivibrio fischeri (strain ATCC 700601 / ES114) (Vibrio fischeri).